A 428-amino-acid polypeptide reads, in one-letter code: MAKTVAYFYDPDVGNFHYGAGHPMKPHRLALTHSLVLHYGLYKKMIVFKPYQASQHDMCRFHSEDYIDFLQRVSPTNMQGFTKSLNAFNVGDDCPVFPGLFEFCSRYTGASLQGATQLNNKICDIAINWAGGLHHAKKFEASGFCYVNDIVIGILELLKYHPRVLYIDIDIHHGDGVQEAFYLTDRVMTVSFHKYGNYFFPGTGDMYEVGAESGRYYCLNVPLRDGIDDQSYKHLFQPVINQVVDFYQPTCIVLQCGADSLGCDRLGCFNLSIRGHGECVEYVKSFNIPLLVLGGGGYTVRNVARCWTYETSLLVEEAISEELPYSEYFEYFAPDFTLHPDVSTRIENQNSRQYLDQIRQTIFENLKMLNHAPSVQIRDVPAGLLTYDRTDEADAEERGPEENYSRPEAPNEFYDGDHDNDKESDVEI.

Residues 3–316 (KTVAYFYDPD…WTYETSLLVE (314 aa)) form a histone deacetylase region. Positions 17, 21, and 25 each coordinate 1D-myo-inositol 1,4,5,6-tetrakisphosphate. Residue His-135 is part of the active site. Zn(2+)-binding residues include Asp-170, His-172, and Asp-259. Residue Arg-265 coordinates 1D-myo-inositol 1,4,5,6-tetrakisphosphate. 2 stretches are compositionally biased toward basic and acidic residues: residues 388-405 (DRTD…ENYS) and 415-428 (DGDH…DVEI). The interval 388 to 428 (DRTDEADAEERGPEENYSRPEAPNEFYDGDHDNDKESDVEI) is disordered. A Phosphoserine modification is found at Ser-424.

Belongs to the histone deacetylase family. HD type 1 subfamily. Interacts with HDAC7 and HDAC9. Interacts with HDAC10, DAXX and DACH1. Found in a complex with NCOR1 and NCOR2. Component of the N-Cor repressor complex, at least composed of NCOR1, NCOR2, HDAC3, TBL1X, TBL1R, CORO2A and GPS2. Interacts with BCOR, MJD2A/JHDM3A, NRIP1, PRDM6 and SRY. Interacts with BTBD14B. Interacts with GLIS2. Interacts (via the DNA-binding domain) with NR2C1; the interaction recruits phosphorylated NR2C1 to PML bodies for sumoylation. Component of the Notch corepressor complex. Interacts with CBFA2T3 and NKAP. Interacts with APEX1; the interaction is not dependent on the acetylated status of APEX1. Interacts with and deacetylates MAPK14. Interacts with ZMYND15. Interacts with SMRT/NCOR2 and BCL6 on DNA enhancer elements. Interacts with INSM1. Interacts with XBP1; the interaction occurs in endothelial cell (EC) under disturbed flow. Interacts (via C-terminus) with CCAR2 (via N-terminus). Interacts with and deacetylates MEF2D. Interacts with BEND3. Interacts with NKAPL. Interacts with DHX36; this interaction occurs in a RNA-dependent manner. Interacts weakly with CRY1; this interaction is enhanced in the presence of FBXL3. Interacts with FBXL3 and BMAL1. Interacts with NCOR1. Interacts with RARA. Interacts with SETD5. In terms of processing, deubiquitinated on 'Lys-63'-linked ubiquitin chains by USP38; leading to a decreased level of histone acetylation. Sumoylated in vitro.

It localises to the nucleus. Its subcellular location is the chromosome. It is found in the cytoplasm. The protein resides in the cytosol. The catalysed reaction is N(6)-acetyl-L-lysyl-[histone] + H2O = L-lysyl-[histone] + acetate. It catalyses the reaction N(6)-acetyl-L-lysyl-[protein] + H2O = L-lysyl-[protein] + acetate. It carries out the reaction N(6)-(2E)-butenoyl-L-lysyl-[protein] + H2O = (2E)-2-butenoate + L-lysyl-[protein]. The enzyme catalyses N(6)-(2-hydroxyisobutanoyl)-L-lysyl-[protein] + H2O = 2-hydroxy-2-methylpropanoate + L-lysyl-[protein]. The catalysed reaction is N(6)-[(S)-lactoyl]-L-lysyl-[protein] + H2O = (S)-lactate + L-lysyl-[protein]. With respect to regulation, inositol tetraphosphate (1D-myo-inositol 1,4,5,6-tetrakisphosphate) promotes the histone deacetylase activity by acting as an intermolecular glue between HDAC3 and NCOR2, thereby promoting its association with the N-Cor complex, a prerequisite for the histone deacetylase activity. Functionally, histone deacetylase that catalyzes the deacetylation of lysine residues on the N-terminal part of the core histones (H2A, H2B, H3 and H4), and some other non-histone substrates. Histone deacetylation gives a tag for epigenetic repression and plays an important role in transcriptional regulation, cell cycle progression and developmental events. Histone deacetylases act via the formation of large multiprotein complexes, such as N-Cor repressor complex, which activate the histone deacetylase activity. Participates in the BCL6 transcriptional repressor activity by deacetylating the H3 'Lys-27' (H3K27) on enhancer elements, antagonizing EP300 acetyltransferase activity and repressing proximal gene expression. Acts as a molecular chaperone for shuttling phosphorylated NR2C1 to PML bodies for sumoylation. Contributes, together with XBP1 isoform 1, to the activation of NFE2L2-mediated HMOX1 transcription factor gene expression in a PI(3)K/mTORC2/Akt-dependent signaling pathway leading to endothelial cell (EC) survival under disturbed flow/oxidative stress. Regulates both the transcriptional activation and repression phases of the circadian clock in a deacetylase activity-independent manner. During the activation phase, promotes the accumulation of ubiquitinated BMAL1 at the E-boxes and during the repression phase, blocks FBXL3-mediated CRY1/2 ubiquitination and promotes the interaction of CRY1 and BMAL1. The NCOR1-HDAC3 complex regulates the circadian expression of the core clock gene BMAL1 and the genes involved in lipid metabolism in the liver. Also functions as a deacetylase for non-histone targets, such as KAT5, MEF2D, MAPK14, RARA and STAT3. Serves as a corepressor of RARA, mediating its deacetylation and repression, leading to inhibition of RARE DNA element binding. In association with RARA, plays a role in the repression of microRNA-10a and thereby in the inflammatory response. In addition to protein deacetylase activity, also acts as a protein-lysine deacylase by recognizing other acyl groups: catalyzes removal of (2E)-butenoyl (crotonyl), lactoyl (lactyl) and 2-hydroxyisobutanoyl (2-hydroxyisobutyryl) acyl groups from lysine residues, leading to protein decrotonylation, delactylation and de-2-hydroxyisobutyrylation, respectively. Catalyzes decrotonylation of MAPRE1/EB1. Mediates delactylation NBN/NBS1, thereby inhibiting DNA double-strand breaks (DSBs) via homologous recombination (HR). This Pongo abelii (Sumatran orangutan) protein is Histone deacetylase 3 (HDAC3).